The primary structure comprises 164 residues: Protein phosphatase 1 regulatory subunit 14C (164 aa).

Over residues 1–19 the composition is skewed to gly residues; that stretch reads MSVVTGGGEAAGGGGGGGA. Positions 1–70 are disordered; the sequence is MSVVTGGGEA…QQQRRHQQGK (70 aa). An N-acetylserine modification is found at Ser2. Residue Ser25 is modified to Phosphoserine. Arg27 is modified (omega-N-methylarginine). The residue at position 33 (Ser33) is a Phosphoserine. Positions 50–62 are enriched in low complexity; sequence VTTVAAAGQVQQQ. A Phosphothreonine; by ILK1 modification is found at Thr72.

It belongs to the PP1 inhibitor family. The main inhibitory site appears to be Thr-72. Has over 600-fold higher inhibitory activity when phosphorylated, creating a molecular switch for regulating the phosphorylation status of PPP1CA substrates and smooth muscle contraction. In terms of tissue distribution, detected in heart, muscle, spinal cord, hippocampus, hypothalamus, thalamus, midbrain, brain stem, cerebellum, brain cortex and olfactory bulb.

It is found in the endomembrane system. Inhibitor of the PP1 regulatory subunit PPP1CA. In Mus musculus (Mouse), this protein is Protein phosphatase 1 regulatory subunit 14C (Ppp1r14c).